A 638-amino-acid chain; its full sequence is 1-deoxy-D-xylulose-5-phosphate synthase (638 aa).

Residues His79 and 120–122 (AHS) contribute to the thiamine diphosphate site. Asp151 lines the Mg(2+) pocket. Thiamine diphosphate-binding positions include 152-153 (GA), Asn180, Tyr289, and Glu371. Asn180 lines the Mg(2+) pocket.

This sequence belongs to the transketolase family. DXPS subfamily. As to quaternary structure, homodimer. Requires Mg(2+) as cofactor. It depends on thiamine diphosphate as a cofactor.

The catalysed reaction is D-glyceraldehyde 3-phosphate + pyruvate + H(+) = 1-deoxy-D-xylulose 5-phosphate + CO2. It participates in metabolic intermediate biosynthesis; 1-deoxy-D-xylulose 5-phosphate biosynthesis; 1-deoxy-D-xylulose 5-phosphate from D-glyceraldehyde 3-phosphate and pyruvate: step 1/1. Its function is as follows. Catalyzes the acyloin condensation reaction between C atoms 2 and 3 of pyruvate and glyceraldehyde 3-phosphate to yield 1-deoxy-D-xylulose-5-phosphate (DXP). The chain is 1-deoxy-D-xylulose-5-phosphate synthase from Rhizobium leguminosarum bv. trifolii (strain WSM2304).